A 614-amino-acid polypeptide reads, in one-letter code: ATP-dependent zinc metalloprotease FtsH (614 aa).

At 1–7 (MKKQWKK) the chain is on the stromal side. Residues 8-28 (IVLFVLPVIITLITLSSFLFY) form a helical membrane-spanning segment. At 29–116 (NQDVVHNWSS…AHPSSSNVNL (88 aa)) the chain is on the lumenal side. The helical transmembrane segment at 117–137 (VSWLSNLLLPLILIITLFFFF) threads the bilayer. Over 138-614 (RRGNKSSSGP…EFMRIVEERV (477 aa)) the chain is Stromal. ATP is bound at residue 211-218 (GPPGTGKT). Zn(2+) is bound at residue His-432. The active site involves Glu-433. Zn(2+)-binding residues include His-436 and Asp-510.

In the central section; belongs to the AAA ATPase family. This sequence in the C-terminal section; belongs to the peptidase M41 family. Homohexamer. The cofactor is Zn(2+).

It localises to the plastid. The protein localises to the chloroplast thylakoid membrane. Functionally, acts as a processive, ATP-dependent zinc metallopeptidase. This is ATP-dependent zinc metalloprotease FtsH from Cyanidium caldarium (Red alga).